A 122-amino-acid chain; its full sequence is Large ribosomal subunit protein bL12 (122 aa).

This sequence belongs to the bacterial ribosomal protein bL12 family. Homodimer. Part of the ribosomal stalk of the 50S ribosomal subunit. Forms a multimeric L10(L12)X complex, where L10 forms an elongated spine to which 2 to 4 L12 dimers bind in a sequential fashion. Binds GTP-bound translation factors.

Functionally, forms part of the ribosomal stalk which helps the ribosome interact with GTP-bound translation factors. Is thus essential for accurate translation. In Actinobacillus pleuropneumoniae serotype 5b (strain L20), this protein is Large ribosomal subunit protein bL12.